Consider the following 284-residue polypeptide: Homeobox protein SIX1 (284 aa).

Residues 124–183 (GEETSYCFKEKSRGVLREWYAHNPYPSPREKRELAEATGLTTTQVSNWFKNRRQRDRAAE) constitute a DNA-binding region (homeobox). The interval 168 to 271 (VSNWFKNRRQ…AHQHQLQDSL (104 aa)) is disordered. Positions 179–190 (DRAAEAKERENT) are enriched in basic and acidic residues. Positions 242 to 271 (RSSNYSLPGLTASQPSHGLQAHQHQLQDSL) are enriched in polar residues.

This sequence belongs to the SIX/Sine oculis homeobox family. As to quaternary structure, interacts with DACH1. Interacts with EYA1. Interacts with EYA2. Interacts with CDH1. Interacts with TBX18. Interacts with CEBPA. Interacts with CEBPB. Interacts with EBF2. Phosphorylated during interphase; becomes hyperphosphorylated during mitosis. Hyperphosphorylation impairs binding to promoter elements. Post-translationally, ubiquitinated by the anaphase promoting complex (APC), leading to its proteasomal degradation.

It localises to the nucleus. The protein resides in the cytoplasm. Functionally, transcription factor that is involved in the regulation of cell proliferation, apoptosis and embryonic development. Plays an important role in the development of several organs, including kidney, muscle and inner ear. Depending on context, functions as a transcriptional repressor or activator. Lacks an activation domain, and requires interaction with EYA family members for transcription activation. Mediates nuclear translocation of EYA1 and EYA2. Binds the 5'-TCA[AG][AG]TTNC-3' motif present in the MEF3 element in the MYOG promoter and CIDEA enhancer. Regulates the expression of numerous genes, including MYC, CCNA1, CCND1 and EZR. Acts as an activator of the IGFBP5 promoter, probably coactivated by EYA2. Repression of precursor cell proliferation in myoblasts is switched to activation through recruitment of EYA3 to the SIX1-DACH1 complex. During myogenesis, seems to act together with EYA2 and DACH2. Regulates the expression of CCNA1. Promotes brown adipocyte differentiation. The sequence is that of Homeobox protein SIX1 (SIX1) from Lagothrix lagotricha (Brown woolly monkey).